The sequence spans 572 residues: NADP-dependent malic enzyme (572 aa).

The residue at position 1 (Met-1) is an N-acetylmethionine. Tyr-102 serves as the catalytic Proton donor. Arg-155 is an NADP(+) binding site. Catalysis depends on Lys-173, which acts as the Proton acceptor. A divalent metal cation is bound by residues Glu-245, Asp-246, and Asp-269. NADP(+) is bound by residues Asp-269 and 301–318 (GAGE…MAME). Ser-336 bears the Phosphoserine mark. Asn-408 serves as a coordination point for NADP(+).

Belongs to the malic enzymes family. Homotetramer. Requires Mg(2+) as cofactor. The cofactor is Mn(2+). Ubiquitous. Up-regulated by 3,5,3'-triiodo-L-thyronine in the liver, kidney and heart.

It is found in the cytoplasm. It catalyses the reaction (S)-malate + NADP(+) = pyruvate + CO2 + NADPH. The catalysed reaction is oxaloacetate + H(+) = pyruvate + CO2. In terms of biological role, catalyzes the oxidative decarboxylation of (S)-malate in the presence of NADP(+) and divalent metal ions, and decarboxylation of oxaloacetate. This chain is NADP-dependent malic enzyme (Me1), found in Rattus norvegicus (Rat).